Consider the following 327-residue polypeptide: Urease accessory protein 4 (327 aa).

The N-linked (GlcNAc...) asparagine glycan is linked to asparagine 120. A helical transmembrane segment spans residues 239 to 259; that stretch reads VYATVLIIGPHLTTLFSYLAY.

This sequence belongs to the UreD family. In terms of assembly, URE4, URE6 and URE7 may form a complex that acts as a GTP-hydrolysis-dependent molecular chaperone, activating the urease apoprotein URE1.

It is found in the membrane. Functionally, urease accessory protein required for the maturation and activation of urease via the functional incorporation of the urease nickel metallocenter. Plays a role in host brain invasion. This chain is Urease accessory protein 4, found in Cryptococcus neoformans var. grubii serotype A (strain H99 / ATCC 208821 / CBS 10515 / FGSC 9487) (Filobasidiella neoformans var. grubii).